The primary structure comprises 163 residues: Ribosome maturation factor RimP (163 aa).

The protein belongs to the RimP family.

Its subcellular location is the cytoplasm. Functionally, required for maturation of 30S ribosomal subunits. The sequence is that of Ribosome maturation factor RimP from Polynucleobacter asymbioticus (strain DSM 18221 / CIP 109841 / QLW-P1DMWA-1) (Polynucleobacter necessarius subsp. asymbioticus).